Reading from the N-terminus, the 296-residue chain is NAD kinase (296 aa).

D78 (proton acceptor) is an active-site residue. Residues D78–G79, N152–D153, R180, D182, and Q251 each bind NAD(+).

This sequence belongs to the NAD kinase family. A divalent metal cation is required as a cofactor.

It localises to the cytoplasm. It carries out the reaction NAD(+) + ATP = ADP + NADP(+) + H(+). Involved in the regulation of the intracellular balance of NAD and NADP, and is a key enzyme in the biosynthesis of NADP. Catalyzes specifically the phosphorylation on 2'-hydroxyl of the adenosine moiety of NAD to yield NADP. The protein is NAD kinase of Neisseria gonorrhoeae (strain ATCC 700825 / FA 1090).